Reading from the N-terminus, the 255-residue chain is uncharacterized protein (255 aa).

Residues 1–18 (MRILIILSIILCSLFTKA) form the signal peptide.

The protein belongs to the MlaA family.

This is an uncharacterized protein from Rickettsia bellii (strain RML369-C).